A 63-amino-acid chain; its full sequence is Small ribosomal subunit protein bS21 (63 aa).

It belongs to the bacterial ribosomal protein bS21 family.

This is Small ribosomal subunit protein bS21 from Phocaeicola vulgatus (strain ATCC 8482 / DSM 1447 / JCM 5826 / CCUG 4940 / NBRC 14291 / NCTC 11154) (Bacteroides vulgatus).